A 163-amino-acid polypeptide reads, in one-letter code: Phosphopantetheine adenylyltransferase (163 aa).

Threonine 11 serves as a coordination point for substrate. ATP is bound by residues 11 to 12 and histidine 19; that span reads TF. Substrate-binding residues include lysine 43, leucine 75, and arginine 89. ATP is bound by residues 90 to 92, glutamate 100, and 125 to 131; these read GLR and YMFISAT.

Belongs to the bacterial CoaD family. Homohexamer. The cofactor is Mg(2+).

Its subcellular location is the cytoplasm. It carries out the reaction (R)-4'-phosphopantetheine + ATP + H(+) = 3'-dephospho-CoA + diphosphate. Its pathway is cofactor biosynthesis; coenzyme A biosynthesis; CoA from (R)-pantothenate: step 4/5. In terms of biological role, reversibly transfers an adenylyl group from ATP to 4'-phosphopantetheine, yielding dephospho-CoA (dPCoA) and pyrophosphate. In Azoarcus sp. (strain BH72), this protein is Phosphopantetheine adenylyltransferase.